The chain runs to 101 residues: Putative defensin-like protein 307 (101 aa).

The first 22 residues, 1-22, serve as a signal peptide directing secretion; the sequence is MEKSALIFIGILLFSTCTSIMA. 3 disulfides stabilise this stretch: Cys29–Cys49, Cys35–Cys54, and Cys40–Cys56.

The protein belongs to the DEFL family.

It localises to the secreted. This chain is Putative defensin-like protein 307, found in Arabidopsis thaliana (Mouse-ear cress).